The following is a 325-amino-acid chain: Phosphate acyltransferase (325 aa).

This sequence belongs to the PlsX family. As to quaternary structure, homodimer. Probably interacts with PlsY.

The protein localises to the cytoplasm. The catalysed reaction is a fatty acyl-[ACP] + phosphate = an acyl phosphate + holo-[ACP]. The protein operates within lipid metabolism; phospholipid metabolism. In terms of biological role, catalyzes the reversible formation of acyl-phosphate (acyl-PO(4)) from acyl-[acyl-carrier-protein] (acyl-ACP). This enzyme utilizes acyl-ACP as fatty acyl donor, but not acyl-CoA. The chain is Phosphate acyltransferase from Staphylococcus epidermidis (strain ATCC 12228 / FDA PCI 1200).